The sequence spans 138 residues: Small ribosomal subunit protein uS11c (138 aa).

It belongs to the universal ribosomal protein uS11 family. In terms of assembly, part of the 30S ribosomal subunit.

It localises to the plastid. The protein resides in the chloroplast. In Illicium oligandrum (Star anise), this protein is Small ribosomal subunit protein uS11c.